Consider the following 970-residue polypeptide: Glycine dehydrogenase (decarboxylating) (970 aa).

N6-(pyridoxal phosphate)lysine is present on K723.

The protein belongs to the GcvP family. The glycine cleavage system is composed of four proteins: P, T, L and H. Requires pyridoxal 5'-phosphate as cofactor.

It carries out the reaction N(6)-[(R)-lipoyl]-L-lysyl-[glycine-cleavage complex H protein] + glycine + H(+) = N(6)-[(R)-S(8)-aminomethyldihydrolipoyl]-L-lysyl-[glycine-cleavage complex H protein] + CO2. In terms of biological role, the glycine cleavage system catalyzes the degradation of glycine. The P protein binds the alpha-amino group of glycine through its pyridoxal phosphate cofactor; CO(2) is released and the remaining methylamine moiety is then transferred to the lipoamide cofactor of the H protein. This chain is Glycine dehydrogenase (decarboxylating), found in Burkholderia pseudomallei (strain 1106a).